The chain runs to 203 residues: Imidazoleglycerol-phosphate dehydratase (203 aa).

It belongs to the imidazoleglycerol-phosphate dehydratase family.

It is found in the cytoplasm. The enzyme catalyses D-erythro-1-(imidazol-4-yl)glycerol 3-phosphate = 3-(imidazol-4-yl)-2-oxopropyl phosphate + H2O. It participates in amino-acid biosynthesis; L-histidine biosynthesis; L-histidine from 5-phospho-alpha-D-ribose 1-diphosphate: step 6/9. The sequence is that of Imidazoleglycerol-phosphate dehydratase from Parvibaculum lavamentivorans (strain DS-1 / DSM 13023 / NCIMB 13966).